A 312-amino-acid chain; its full sequence is Ribonuclease Z (312 aa).

Zn(2+)-binding residues include His63, His65, Asp67, His68, His140, Asp211, and His269. Asp67 acts as the Proton acceptor in catalysis.

The protein belongs to the RNase Z family. As to quaternary structure, homodimer. The cofactor is Zn(2+).

It catalyses the reaction Endonucleolytic cleavage of RNA, removing extra 3' nucleotides from tRNA precursor, generating 3' termini of tRNAs. A 3'-hydroxy group is left at the tRNA terminus and a 5'-phosphoryl group is left at the trailer molecule.. Zinc phosphodiesterase, which displays some tRNA 3'-processing endonuclease activity. Probably involved in tRNA maturation, by removing a 3'-trailer from precursor tRNA. The protein is Ribonuclease Z of Shouchella clausii (strain KSM-K16) (Alkalihalobacillus clausii).